A 171-amino-acid chain; its full sequence is Small ribosomal subunit protein uS5 (171 aa).

Residues 12 to 75 enclose the S5 DRBM domain; the sequence is LKEKLISVNR…EKARRNMIQV (64 aa).

This sequence belongs to the universal ribosomal protein uS5 family. As to quaternary structure, part of the 30S ribosomal subunit. Contacts proteins S4 and S8.

With S4 and S12 plays an important role in translational accuracy. Functionally, located at the back of the 30S subunit body where it stabilizes the conformation of the head with respect to the body. This chain is Small ribosomal subunit protein uS5, found in Buchnera aphidicola subsp. Baizongia pistaciae (strain Bp).